Reading from the N-terminus, the 141-residue chain is ATP synthase epsilon chain (141 aa).

Belongs to the ATPase epsilon chain family. In terms of assembly, F-type ATPases have 2 components, CF(1) - the catalytic core - and CF(0) - the membrane proton channel. CF(1) has five subunits: alpha(3), beta(3), gamma(1), delta(1), epsilon(1). CF(0) has three main subunits: a, b and c.

It localises to the cell inner membrane. Produces ATP from ADP in the presence of a proton gradient across the membrane. The protein is ATP synthase epsilon chain of Pseudomonas syringae pv. syringae (strain B728a).